Consider the following 362-residue polypeptide: 3-dehydroquinate synthase (362 aa).

NAD(+) is bound by residues 71-76 (DGEQYK), 105-109 (GVVGD), 129-130 (TT), K142, K151, and 169-172 (CLKT). 3 residues coordinate Zn(2+): E184, H247, and H264.

Belongs to the sugar phosphate cyclases superfamily. Dehydroquinate synthase family. It depends on Co(2+) as a cofactor. Zn(2+) serves as cofactor. NAD(+) is required as a cofactor.

It is found in the cytoplasm. It carries out the reaction 7-phospho-2-dehydro-3-deoxy-D-arabino-heptonate = 3-dehydroquinate + phosphate. The protein operates within metabolic intermediate biosynthesis; chorismate biosynthesis; chorismate from D-erythrose 4-phosphate and phosphoenolpyruvate: step 2/7. Functionally, catalyzes the conversion of 3-deoxy-D-arabino-heptulosonate 7-phosphate (DAHP) to dehydroquinate (DHQ). The chain is 3-dehydroquinate synthase from Escherichia coli O81 (strain ED1a).